We begin with the raw amino-acid sequence, 232 residues long: 2,3,4,5-tetrahydropyridine-2,6-dicarboxylate N-acetyltransferase (232 aa).

This sequence belongs to the transferase hexapeptide repeat family. DapH subfamily.

It catalyses the reaction (S)-2,3,4,5-tetrahydrodipicolinate + acetyl-CoA + H2O = L-2-acetamido-6-oxoheptanedioate + CoA. The protein operates within amino-acid biosynthesis; L-lysine biosynthesis via DAP pathway; LL-2,6-diaminopimelate from (S)-tetrahydrodipicolinate (acetylase route): step 1/3. Its function is as follows. Catalyzes the transfer of an acetyl group from acetyl-CoA to tetrahydrodipicolinate. The protein is 2,3,4,5-tetrahydropyridine-2,6-dicarboxylate N-acetyltransferase of Streptococcus pneumoniae (strain Taiwan19F-14).